The sequence spans 156 residues: MSINATLLGQTLAFIIFVWCCMKFVWPPLMAAIEARQKAIADGLSSAERAKKDLDLAKANATDQLKEAKLQAAQIIEQANKRKAQIIDEAAVGAHTEREKILAQGRAEIDAERHRAKEELRKQVAALAIAGAEKILARHIDQAANSDIVDKLVAEL.

A helical membrane pass occupies residues Ala-13–Ile-33.

Belongs to the ATPase B chain family. As to quaternary structure, F-type ATPases have 2 components, F(1) - the catalytic core - and F(0) - the membrane proton channel. F(1) has five subunits: alpha(3), beta(3), gamma(1), delta(1), epsilon(1). F(0) has three main subunits: a(1), b(2) and c(10-14). The alpha and beta chains form an alternating ring which encloses part of the gamma chain. F(1) is attached to F(0) by a central stalk formed by the gamma and epsilon chains, while a peripheral stalk is formed by the delta and b chains.

It is found in the cell inner membrane. Functionally, f(1)F(0) ATP synthase produces ATP from ADP in the presence of a proton or sodium gradient. F-type ATPases consist of two structural domains, F(1) containing the extramembraneous catalytic core and F(0) containing the membrane proton channel, linked together by a central stalk and a peripheral stalk. During catalysis, ATP synthesis in the catalytic domain of F(1) is coupled via a rotary mechanism of the central stalk subunits to proton translocation. Component of the F(0) channel, it forms part of the peripheral stalk, linking F(1) to F(0). This Aeromonas salmonicida (strain A449) protein is ATP synthase subunit b.